A 239-amino-acid polypeptide reads, in one-letter code: MATPHINAEMGDFADVVLMPGDPLRAKYIAETFLEDAREVNNVRGMLGFTGTYKGRKISVMGHGMGIPSCSIYTKELITDFGVKKIIRVGSCGAVLPHVKLRDVVIGMGACTDSKVNRIRFKDHDFAAIADFDMVRNAVDAAKALGVDARVGNLFSADLFYSPDGEMFDVMEKYGILGVEMEAAGIYGVAAEFGAKALTICTVSDHIRTHEQTTAAERQTTFNDMIKIALESVLLGNKE.

H5 is an a purine D-ribonucleoside binding site. Residues G21 and R25 each contribute to the phosphate site. K27 is subject to N6-acetyllysine. Phosphate-binding positions include R44 and 88–91; that span reads RVGS. Residues 180–182 and 204–205 contribute to the a purine D-ribonucleoside site; these read EME and SD. Residue D205 is the Proton donor of the active site.

It belongs to the PNP/UDP phosphorylase family. As to quaternary structure, homohexamer; trimer of homodimers.

It carries out the reaction a purine D-ribonucleoside + phosphate = a purine nucleobase + alpha-D-ribose 1-phosphate. The enzyme catalyses a purine 2'-deoxy-D-ribonucleoside + phosphate = a purine nucleobase + 2-deoxy-alpha-D-ribose 1-phosphate. Functionally, catalyzes the reversible phosphorolytic breakdown of the N-glycosidic bond in the beta-(deoxy)ribonucleoside molecules, with the formation of the corresponding free purine bases and pentose-1-phosphate. This chain is Purine nucleoside phosphorylase DeoD-type, found in Shigella dysenteriae serotype 1 (strain Sd197).